The chain runs to 77 residues: U8-lycotoxin-Ls1j (77 aa).

An N-terminal signal peptide occupies residues 1-20; that stretch reads MKLIIFTGLILFAIVSLIEA. Positions 21–26 are excised as a propeptide; that stretch reads QANNEK.

The protein belongs to the neurotoxin 19 (CSTX) family. 08 (U8-Lctx) subfamily. Contains 4 disulfide bonds. As to expression, expressed by the venom gland.

The protein resides in the secreted. This chain is U8-lycotoxin-Ls1j, found in Lycosa singoriensis (Wolf spider).